We begin with the raw amino-acid sequence, 1047 residues long: FACT complex subunit SPT16 (1047 aa).

Position 2 is an N-acetylalanine (A2). An N6-acetyllysine modification is found at K139. Position 188 is a phosphoserine (S188). Residues K196 and K223 each carry the N6-acetyllysine modification. Positions 432–507 (LKNEDEEEEE…GEQQIQKARK (76 aa)) form a coiled coil. S455 bears the Phosphoserine mark. The interval 492–518 (RLTEQKGEQQIQKARKSNVSYKNPSLM) is disordered. Residue K497 forms a Glycyl lysine isopeptide (Lys-Gly) (interchain with G-Cter in SUMO2) linkage. Residues 499-514 (EQQIQKARKSNVSYKN) show a composition bias toward polar residues. Position 508 is a phosphoserine (S508). The residue at position 513 (K513) is an N6-acetyllysine; alternate. K513 is covalently cross-linked (Glycyl lysine isopeptide (Lys-Gly) (interchain with G-Cter in SUMO2); alternate). Residue K647 forms a Glycyl lysine isopeptide (Lys-Gly) (interchain with G-Cter in SUMO2) linkage. Phosphoserine is present on residues S650 and S658. K732 and K786 each carry N6-acetyllysine. A Phosphothreonine modification is found at T903. At K904 the chain carries N6-acetyllysine. The interval 918-1047 (EQGGWSFLEP…SSAPPKKKRK (130 aa)) is disordered. Acidic residues predominate over residues 927–973 (PEGEGSDAEEGDSESEIEDETFNPSEDDYEEEEEDSDEDYSSEAEES). Residues S979, S982, S986, and S1015 each carry the phosphoserine modification. Over residues 985 to 1005 (ESGKDWDELEEEARKADRESR) the composition is skewed to basic and acidic residues. The span at 1024–1039 (VHSSGRGSNRGSRHSS) shows a compositional bias: low complexity.

It belongs to the peptidase M24 family. SPT16 subfamily. Interacts with MYOG (via C-terminal region). Component of the FACT complex, a stable heterodimer of SSRP1 and SUPT16H. Also a component of a CK2-SPT16-SSRP1 complex which forms following UV irradiation, composed of SSRP1, SUPT16H, CSNK2A1, CSNK2A2 and CSNK2B. Interacts with NEK9. Binds to histone H2A-H2B. Identified in a centromere complex containing histones H2A, H2B and H4, and at least CENPA, CENPB, CENPC, CENPT, CENPN, HJURP, SUPT16H, SSRP1 and RSF1. Interacts with GTF2E2. As to quaternary structure, (Microbial infection) Interacts with Herpes simplex virus 1 (HHV-1) protein ICP22; this interaction relocalizes the FACT complex to viral genomes in infected cells. ADP-ribosylated. ADP-ribosylation by PARP1 is induced by genotoxic stress and correlates with dissociation of FACT from chromatin. As to expression, ubiquitous.

It localises to the nucleus. The protein localises to the chromosome. In terms of biological role, component of the FACT complex, a general chromatin factor that acts to reorganize nucleosomes. The FACT complex is involved in multiple processes that require DNA as a template such as mRNA elongation, DNA replication and DNA repair. During transcription elongation the FACT complex acts as a histone chaperone that both destabilizes and restores nucleosomal structure. It facilitates the passage of RNA polymerase II and transcription by promoting the dissociation of one histone H2A-H2B dimer from the nucleosome, then subsequently promotes the reestablishment of the nucleosome following the passage of RNA polymerase II. The FACT complex is probably also involved in phosphorylation of 'Ser-392' of p53/TP53 via its association with CK2 (casein kinase II). This Homo sapiens (Human) protein is FACT complex subunit SPT16 (SUPT16H).